A 352-amino-acid chain; its full sequence is Anthranilate phosphoribosyltransferase (352 aa).

5-phospho-alpha-D-ribose 1-diphosphate-binding positions include Gly94, Gly97 to Ser98, Ser102, Asn104 to Thr107, Lys122 to Ser130, and Ser134. Gly94 contacts anthranilate. Ser106 provides a ligand contact to Mg(2+). Asn125 contributes to the anthranilate binding site. An anthranilate-binding site is contributed by Arg180. Mg(2+)-binding residues include Asp239 and Glu240.

This sequence belongs to the anthranilate phosphoribosyltransferase family. Homodimer. Mg(2+) is required as a cofactor.

It catalyses the reaction N-(5-phospho-beta-D-ribosyl)anthranilate + diphosphate = 5-phospho-alpha-D-ribose 1-diphosphate + anthranilate. The protein operates within amino-acid biosynthesis; L-tryptophan biosynthesis; L-tryptophan from chorismate: step 2/5. Functionally, catalyzes the transfer of the phosphoribosyl group of 5-phosphorylribose-1-pyrophosphate (PRPP) to anthranilate to yield N-(5'-phosphoribosyl)-anthranilate (PRA). The polypeptide is Anthranilate phosphoribosyltransferase (Citrifermentans bemidjiense (strain ATCC BAA-1014 / DSM 16622 / JCM 12645 / Bem) (Geobacter bemidjiensis)).